The sequence spans 400 residues: Telomeric repeat-binding factor 2-interacting protein 1 (400 aa).

Ala2 is modified (N-acetylalanine). Residues Ser36 and Ser43 each carry the phosphoserine modification. One can recognise a BRCT domain in the interval 78–101 (FISTQYILDCVERNERLELEAYRL). The segment at 105-126 (SAADTGSEAKPGALAEGAAEPE) is disordered. Residues 112-125 (EAKPGALAEGAAEP) show a composition bias toward low complexity. Residue Lys114 forms a Glycyl lysine isopeptide (Lys-Gly) (interchain with G-Cter in SUMO2) linkage. In terms of domain architecture, Myb-like spans 128–188 (QRLAGRIAFT…SLKDRYLKHL (61 aa)). A phosphoserine mark is found at Ser154 and Ser156. Lys194 is covalently cross-linked (Glycyl lysine isopeptide (Lys-Gly) (interchain with G-Cter in SUMO2)). Disordered stretches follow at residues 196 to 244 (LLGD…EEIQ) and 264 to 311 (VVVD…SQPE). Residues Ser203 and Ser206 each carry the phosphoserine modification. Residues Lys208, Lys212, and Lys240 each participate in a glycyl lysine isopeptide (Lys-Gly) (interchain with G-Cter in SUMO2) cross-link. Residues 280–305 (CDDDPPTPEEDSETQPDEEEEEEEEE) are compositionally biased toward acidic residues. Residue Lys373 forms a Glycyl lysine isopeptide (Lys-Gly) (interchain with G-Cter in SUMO2) linkage. The short motif at 384 to 400 (KKFGAQNVARRIEFRKK) is the Nuclear localization signal element.

This sequence belongs to the RAP1 family. In terms of assembly, associates with the I-kappa-B-kinase (IKK) core complex, composed of CHUK, IKBKB and IKBKG. Homodimer. Component of the shelterin complex (telosome) composed of TERF1, TERF2, TINF2, TERF2IP ACD and POT1. Interacts with TERF2 (but not TERF1) with its C-terminus. Interacts with SLX4/BTBD12. Interacts with TERF2; the interaction is direct.

It is found in the nucleus. It localises to the cytoplasm. The protein resides in the chromosome. Its subcellular location is the telomere. Its function is as follows. Acts both as a regulator of telomere function and as a transcription regulator. Involved in the regulation of telomere length and protection as a component of the shelterin complex (telosome). In contrast to other components of the shelterin complex, it is dispensible for telomere capping and does not participate in the protection of telomeres against non-homologous end-joining (NHEJ)-mediated repair. Instead, it is required to negatively regulate telomere recombination and is essential for repressing homology-directed repair (HDR), which can affect telomere length. Does not bind DNA directly: recruited to telomeric double-stranded 5'-TTAGGG-3' repeats via its interaction with TERF2. Independently of its function in telomeres, also acts as a transcription regulator: recruited to extratelomeric 5'-TTAGGG-3' sites via its association with TERF2 or other factors, and regulates gene expression. When cytoplasmic, associates with the I-kappa-B-kinase (IKK) complex and acts as a regulator of the NF-kappa-B signaling by promoting IKK-mediated phosphorylation of RELA/p65, leading to activate expression of NF-kappa-B target genes. In Macaca fascicularis (Crab-eating macaque), this protein is Telomeric repeat-binding factor 2-interacting protein 1 (TERF2IP).